We begin with the raw amino-acid sequence, 464 residues long: MSTDKTNQSWGGRFSEPVDAFVARFTASVEFDKRLYRHDIMGSIAHATMLAKAGVLTDAERDQIIANLKDIQSEIEAGTFDWRVDLEDVHMNIEARLTDRIGIVGKKLHTGRSRNDQVATDIRLWLRDEIDVILGEITRLQQGLLGLAEAEADTIMPGFTHLQTAQPVTFGHHLLAWFEMLSRDYERLVDCRKRTNRMPLGSAALAGTTYPIQREITCELLGFEAISGNSLDGVSDRDFAIEFCAAASVAMMHLSRFSEELVLWTSAQFQFIDLPDRFCTGSSIMPQKKNPDVPELVRGKTGRVFGALTGLLALMKGQPLAYNKDNQEDKEPLFDAADTLRDSLRAFADMVPAIKPKREIMREAALRGFSTATDLADYLVRKGLPFRDCHEIVGHAVKYGVQTGKDLAEMTLDELRQFSGEIGDDVFAVLTLEGSVNARDHIGGTAPAQVRAAVKRGQALLAGR.

The protein belongs to the lyase 1 family. Argininosuccinate lyase subfamily.

The protein resides in the cytoplasm. The enzyme catalyses 2-(N(omega)-L-arginino)succinate = fumarate + L-arginine. It functions in the pathway amino-acid biosynthesis; L-arginine biosynthesis; L-arginine from L-ornithine and carbamoyl phosphate: step 3/3. This Stutzerimonas stutzeri (strain A1501) (Pseudomonas stutzeri) protein is Argininosuccinate lyase.